Here is a 386-residue protein sequence, read N- to C-terminus: S-adenosylmethionine synthase (386 aa).

Residue His-17 participates in ATP binding. Residue Asp-19 participates in Mg(2+) binding. Glu-45 contributes to the K(+) binding site. The L-methionine site is built by Glu-58 and Gln-101. A flexible loop region spans residues 101-111 (QSPDISQGVTE). Residues 168-170 (DAK), Asp-242, 248-249 (RK), Ala-265, and Lys-269 each bind ATP. Asp-242 is a binding site for L-methionine. An L-methionine-binding site is contributed by Lys-273.

It belongs to the AdoMet synthase family. Homotetramer; dimer of dimers. Requires Mg(2+) as cofactor. K(+) serves as cofactor.

It is found in the cytoplasm. The enzyme catalyses L-methionine + ATP + H2O = S-adenosyl-L-methionine + phosphate + diphosphate. It functions in the pathway amino-acid biosynthesis; S-adenosyl-L-methionine biosynthesis; S-adenosyl-L-methionine from L-methionine: step 1/1. Its function is as follows. Catalyzes the formation of S-adenosylmethionine (AdoMet) from methionine and ATP. The overall synthetic reaction is composed of two sequential steps, AdoMet formation and the subsequent tripolyphosphate hydrolysis which occurs prior to release of AdoMet from the enzyme. The sequence is that of S-adenosylmethionine synthase from Leptospira borgpetersenii serovar Hardjo-bovis (strain JB197).